Here is a 1046-residue protein sequence, read N- to C-terminus: UDP-N-acetylglucosamine--peptide N-acetylglucosaminyltransferase 110 kDa subunit (1046 aa).

Ala2 carries the post-translational modification N-acetylalanine. Residues Ser3 and Ser4 each carry the phosphoserine; by GSK3-beta; alternate modification. Residues Ser3 and Ser4 are each glycosylated (O-linked (GlcNAc) serine; alternate). A Phosphoserine modification is found at Ser20. TPR repeat units lie at residues Phe21–Asn54, Ala89–Phe122, Ile123–Leu156, Tyr157–Phe190, Ala191–Phe224, Leu225–His258, Ala259–Phe292, Pro293–His326, Ala327–Phe360, Ala361–Phe394, Ala395–Phe428, and Ala429–Phe462. A glycan (O-linked (GlcNAc) serine; by autocatalysis) is linked at Ser399. Thr454 bears the Phosphothreonine mark. A TPR 13; truncated repeat occupies Pro463 to Leu473. The short motif at Asp464–Tyr466 is the DFP motif element. The Nuclear localization signal signature appears at Lys487 to Pro503. His508 acts as the Proton acceptor in catalysis. UDP is bound by residues Gln849, Lys852, Ala906–Lys908, His911–Arg914, His930–Thr932, and Asp935. Tyr989 carries the phosphotyrosine modification. Positions Lys991 to Lys1010 are required for phosphatidylinositol 3,4,5-triphosphate binding.

The protein belongs to the glycosyltransferase 41 family. O-GlcNAc transferase subfamily. In terms of assembly, monomer; may exist in different oligomerization states in cells. Homotrimer, oligomerizes via TPR repeats 6 and 7. Trimerization is not necessary for activity in vitro, however it increases affinity for UDP-GlcNAc. Component of a THAP1/THAP3-HCFC1-OGT complex. Component of the NSL complex at least composed of MOF/KAT8, KANSL1, KANSL2, KANSL3, MCRS1, PHF20, OGT1/OGT, WDR5 and HCFC1. Found in a complex with KIF5B, RHOT1, RHOT2 and TRAK1. Found in a complex composed of at least SINHCAF, SIN3A, HDAC1, SAP30, RBBP4, OGT and TET1. Component of a complex composed of KMT2E/MLL5, OGT and USP7; the complex stabilizes KMT2E/MLL5, preventing KMT2E/MLL5 ubiquitination and proteasomal-mediated degradation. Interacts (via TPRs 1-6) with SIN3A; the interaction mediates transcriptional repression in parallel with histone deacetylase. Interacts (via TPR 5-6) with TET1, TET2 and TET3. Interacts (via TPR repeats 6 and 7) with ATXN10. Interacts with NSD2. Interacts with PROSER1; this interaction mediates TET2 O-GlcNAcylation and stability by promoting the interaction between OGT and TET2. In terms of processing, ubiquitinated by the SCF(FBXO31) complex, leading to its proteasomal degradation. Phosphorylation on Ser-3 or Ser-4 by GSK3-beta positively regulates its activity. Phosphorylation at Thr-454 by AMPK promotes nuclear localization. Post-translationally, glycosylated via autocatalysis; O-GlcNAcylation at Ser-399 promotes nuclear localization.

It is found in the cytoplasm. The protein localises to the nucleus. The protein resides in the cell membrane. It localises to the mitochondrion membrane. Its subcellular location is the cell projection. The enzyme catalyses L-seryl-[protein] + UDP-N-acetyl-alpha-D-glucosamine = 3-O-(N-acetyl-beta-D-glucosaminyl)-L-seryl-[protein] + UDP + H(+). It carries out the reaction L-threonyl-[protein] + UDP-N-acetyl-alpha-D-glucosamine = 3-O-(N-acetyl-beta-D-glucosaminyl)-L-threonyl-[protein] + UDP + H(+). It functions in the pathway protein modification; protein glycosylation. Subject to product inhibition by UDP. Its function is as follows. Catalyzes the transfer of a single N-acetylglucosamine from UDP-GlcNAc to a serine or threonine residue in cytoplasmic and nuclear proteins resulting in their modification with a beta-linked N-acetylglucosamine (O-GlcNAc). Glycosylates a large and diverse number of proteins including histone H2B, AKT1, AMPK, ATG4B, CAPRIN1, EZH2, FNIP1, GSDMD, KRT7, LMNA, LMNB1, LMNB2, RPTOR, HOXA1, PFKL, KMT2E/MLL5, MAPT/TAU, TET2, RBL2, RET, NOD2 and HCFC1. Can regulate their cellular processes via cross-talk between glycosylation and phosphorylation or by affecting proteolytic processing. Involved in insulin resistance in muscle and adipocyte cells via glycosylating insulin signaling components and inhibiting the 'Thr-308' phosphorylation of AKT1, enhancing IRS1 phosphorylation and attenuating insulin signaling. Involved in glycolysis regulation by mediating glycosylation of 6-phosphofructokinase PFKL, inhibiting its activity. Plays a key role in chromatin structure by mediating O-GlcNAcylation of 'Ser-112' of histone H2B: recruited to CpG-rich transcription start sites of active genes via its interaction with TET proteins (TET1, TET2 or TET3). As part of the NSL complex indirectly involved in acetylation of nucleosomal histone H4 on several lysine residues. O-GlcNAcylation of 'Ser-75' of EZH2 increases its stability, and facilitating the formation of H3K27me3 by the PRC2/EED-EZH2 complex. Stabilizes KMT2E/MLL5 by mediating its glycosylation, thereby preventing KMT2E/MLL5 ubiquitination. Regulates circadian oscillation of the clock genes and glucose homeostasis in the liver. Stabilizes clock proteins BMAL1 and CLOCK through O-glycosylation, which prevents their ubiquitination and subsequent degradation. Promotes the CLOCK-BMAL1-mediated transcription of genes in the negative loop of the circadian clock such as PER1/2 and CRY1/2. O-glycosylates HCFC1 and regulates its proteolytic processing and transcriptional activity. Component of a THAP1/THAP3-HCFC1-OGT complex that is required for the regulation of the transcriptional activity of RRM1. Regulates mitochondrial motility in neurons by mediating glycosylation of TRAK1. Promotes autophagy by mediating O-glycosylation of ATG4B. Acts as a regulator of mTORC1 signaling by mediating O-glycosylation of RPTOR and FNIP1: O-GlcNAcylation of RPTOR in response to glucose sufficiency promotes activation of the mTORC1 complex. In Mus musculus (Mouse), this protein is UDP-N-acetylglucosamine--peptide N-acetylglucosaminyltransferase 110 kDa subunit (Ogt).